Here is a 141-residue protein sequence, read N- to C-terminus: Cystatin (141 aa).

The N-terminal stretch at 1-26 is a signal peptide; sequence MVHSQLPVAAPLRLLCALLLLPSATM. The Cystatin domain occupies 29–129; sequence GGISPRSVTD…CHFQVWSRPW (101 aa). A Secondary area of contact motif is present at residues 73 to 77; that stretch reads QVVAG. 2 disulfide bridges follow: Cys91-Cys107 and Cys120-Cys140.

The protein belongs to the cystatin family. Expressed by the venom gland at an extremely low level (at protein level).

It localises to the secreted. Inhibits various C1 cysteine proteases including cathepsin L, papain and cathepsin B. This protein has no toxic activity and its function in the venom is unknown. It may play a role as a housekeeping or regulatory protein. The protein is Cystatin of Oxyuranus microlepidotus (Inland taipan).